A 261-amino-acid polypeptide reads, in one-letter code: Cytochrome c oxidase subunit 3 (261 aa).

Topologically, residues M1–P15 are mitochondrial matrix. A helical membrane pass occupies residues W16–W34. Over F35–F40 the chain is Mitochondrial intermembrane. The helical transmembrane segment at L41–T66 threads the bilayer. At F67–T72 the chain is on the mitochondrial matrix side. Residues P73–S105 form a helical membrane-spanning segment. Over L106–E128 the chain is Mitochondrial intermembrane. Residues V129–M152 form a helical membrane-spanning segment. Residues E153–N155 lie on the Mitochondrial matrix side of the membrane. A helical transmembrane segment spans residues R156–E183. Residues S184–D190 lie on the Mitochondrial intermembrane side of the membrane. Residues G191–F223 form a helical membrane-spanning segment. Residues N224 to H232 are Mitochondrial matrix-facing. Residues F233 to I256 traverse the membrane as a helical segment. Residues Y257–S261 are Mitochondrial intermembrane-facing.

The protein belongs to the cytochrome c oxidase subunit 3 family. Component of the cytochrome c oxidase (complex IV, CIV), a multisubunit enzyme composed of 14 subunits. The complex is composed of a catalytic core of 3 subunits MT-CO1, MT-CO2 and MT-CO3, encoded in the mitochondrial DNA, and 11 supernumerary subunits COX4I, COX5A, COX5B, COX6A, COX6B, COX6C, COX7A, COX7B, COX7C, COX8 and NDUFA4, which are encoded in the nuclear genome. The complex exists as a monomer or a dimer and forms supercomplexes (SCs) in the inner mitochondrial membrane with NADH-ubiquinone oxidoreductase (complex I, CI) and ubiquinol-cytochrome c oxidoreductase (cytochrome b-c1 complex, complex III, CIII), resulting in different assemblies (supercomplex SCI(1)III(2)IV(1) and megacomplex MCI(2)III(2)IV(2)).

It localises to the mitochondrion inner membrane. It carries out the reaction 4 Fe(II)-[cytochrome c] + O2 + 8 H(+)(in) = 4 Fe(III)-[cytochrome c] + 2 H2O + 4 H(+)(out). Its function is as follows. Component of the cytochrome c oxidase, the last enzyme in the mitochondrial electron transport chain which drives oxidative phosphorylation. The respiratory chain contains 3 multisubunit complexes succinate dehydrogenase (complex II, CII), ubiquinol-cytochrome c oxidoreductase (cytochrome b-c1 complex, complex III, CIII) and cytochrome c oxidase (complex IV, CIV), that cooperate to transfer electrons derived from NADH and succinate to molecular oxygen, creating an electrochemical gradient over the inner membrane that drives transmembrane transport and the ATP synthase. Cytochrome c oxidase is the component of the respiratory chain that catalyzes the reduction of oxygen to water. Electrons originating from reduced cytochrome c in the intermembrane space (IMS) are transferred via the dinuclear copper A center (CU(A)) of subunit 2 and heme A of subunit 1 to the active site in subunit 1, a binuclear center (BNC) formed by heme A3 and copper B (CU(B)). The BNC reduces molecular oxygen to 2 water molecules using 4 electrons from cytochrome c in the IMS and 4 protons from the mitochondrial matrix. This chain is Cytochrome c oxidase subunit 3 (MT-CO3), found in Osphranter robustus (Wallaroo).